Reading from the N-terminus, the 1704-residue chain is Villidin (1704 aa).

4 WD repeats span residues 82–122 (GHTD…LIKD), 133–173 (KQQK…EQSS), 180–221 (GHED…TPIQ), and 225–271 (THEG…SSQP). Disordered regions lie at residues 439–460 (IGNSGSGGGGGDGDGNGGDSPF) and 606–721 (SVPS…NSST). A compositionally biased stretch (gly residues) spans 442–456 (SGSGGGGGDGDGNGG). Residues 459-563 (PFITEGIVKQ…WCQSINAYRE (105 aa)) form the PH 1 domain. Composition is skewed to low complexity over residues 613-636 (QQQQQQQGSESPNSTTPKSSTPTQ), 651-701 (SLKS…SSSS), and 709-721 (NNSTSSTPLNSST). PH domains lie at 727–828 (DIVI…QNLK) and 871–969 (EQPL…AARK). A disordered region spans residues 848–877 (LISSPMSDDESNTNEGGVEEEEEEQPLEGQ). The segment covering 854–873 (SDDESNTNEGGVEEEEEEQP) has biased composition (acidic residues). Gelsolin-like repeat units follow at residues 1025–1119 (KQKI…LGGN), 1138–1241 (IKTT…FANY), 1293–1390 (GRVK…FKTK), 1404–1494 (KKPS…FEST), and 1520–1615 (RFFV…FRAW). The HP domain occupies 1641–1704 (DYLKEIYTYE…EGIKKELFLF (64 aa)).

It localises to the membrane. It is found in the cytoplasm. The protein localises to the cytoskeleton. May function as a linker between membranes and the actin cytoskeleton. This chain is Villidin (vilA), found in Dictyostelium discoideum (Social amoeba).